The sequence spans 173 residues: Alpha-crystallin A chain (173 aa).

Residue M1 is modified to N-acetylmethionine. Residues M1–E63 form a required for complex formation with BFSP1 and BFSP2 region. Q6 is modified (deamidated glutamine; partial). The residue at position 45 (S45) is a Phosphoserine. Q50 bears the Deamidated glutamine; partial mark. Residues L52–S162 form the sHSP domain. Residues K70 and K99 each carry the N6-acetyllysine modification. H100 lines the Zn(2+) pocket. N101 bears the Deamidated asparagine; partial mark. Zn(2+)-binding residues include E102 and H107. S122 is modified (phosphoserine). The residue at position 123 (N123) is a Deamidated asparagine; partial. The interval P144–S173 is disordered. Positions G153 to P167 are enriched in basic and acidic residues. H154 lines the Zn(2+) pocket. An O-linked (GlcNAc) serine glycan is attached at S162.

This sequence belongs to the small heat shock protein (HSP20) family. As to quaternary structure, heteromer composed of three CRYAA and one CRYAB subunits. Inter-subunit bridging via zinc ions enhances stability, which is crucial as there is no protein turn over in the lens. Can also form homodimers and homotetramers (dimers of dimers) which serve as the building blocks of homooligomers. Within homooligomers, the zinc-binding motif is created from residues of 3 different molecules. His-100 and Glu-102 from one molecule are ligands of the zinc ion, and His-107 and His-154 residues from additional molecules complete the site with tetrahedral coordination geometry. Part of a complex required for lens intermediate filament formation composed of BFSP1, BFSP2 and CRYAA. Post-translationally, acetylation at Lys-70 may increase chaperone activity. In terms of processing, undergoes age-dependent proteolytical cleavage at the C-terminus.

The protein resides in the cytoplasm. It is found in the nucleus. Its function is as follows. Contributes to the transparency and refractive index of the lens. Acts as a chaperone, preventing aggregation of various proteins under a wide range of stress conditions. Required for the correct formation of lens intermediate filaments as part of a complex composed of BFSP1, BFSP2 and CRYAA. The chain is Alpha-crystallin A chain (CRYAA) from Canis lupus familiaris (Dog).